The chain runs to 390 residues: Putative F-box protein At3g52320 (390 aa).

Residues 21–71 (VVFLPEIPEEMLIDILIRLPAKSLMRFKCVSKLWLSLITSRYFTNRFFKPS) form the F-box domain.

This chain is Putative F-box protein At3g52320, found in Arabidopsis thaliana (Mouse-ear cress).